The following is a 97-amino-acid chain: Mapk-regulated corepressor-interacting protein 1 (97 aa).

The segment at 1–30 (MTSSPVSRVVYNGKRTSSPRSPPSSSEIFT) is disordered. Serine 21 and serine 24 each carry phosphoserine. Threonine 30 bears the Phosphothreonine mark. A Phosphotyrosine modification is found at tyrosine 41. Position 79 is an N6-acetyllysine (lysine 79). A PXDLS motif motif is present at residues 80–84 (PIDLS).

The protein belongs to the MCRIP family. In terms of assembly, interacts (unphosphorylated form, via the PXDLS motif) with CTBP1, competitively inhibiting CTBP-ZEB1 interaction. Interacts with CTBP2. Interacts with MCRIP2. Interacts with DDX6. Post-translationally, phosphorylation by MAPK3/1 (ERK1/2) regulates MCRIP1 binding to CTBP(s).

The protein resides in the nucleus. It localises to the cytoplasm. It is found in the stress granule. The phosphorylation status of MCRIP1 functions as a molecular switch to regulate epithelial-mesenchymal transition. Unphosphorylated MCRIP1 binds to and inhibits the transcriptional corepressor CTBP(s). When phosphorylated by MAPK/ERK, MCRIP1 releases CTBP(s) resulting in transcriptional silencing of the E-cadherin gene and induction of epithelial-mesenchymal transition. This Homo sapiens (Human) protein is Mapk-regulated corepressor-interacting protein 1.